The sequence spans 295 residues: Cbb3-type cytochrome c oxidase subunit CcoP (295 aa).

Topologically, residues 1 to 31 (MAQKEKDALSGVETTGHEWDGLRELNNPLPK) are cytoplasmic. Residues 32 to 52 (WWLYIFYVCIAWSLVYYVLYP) form a helical membrane-spanning segment. Topologically, residues 53-295 (AWPLGKSYTK…VYVHNLGGGK (243 aa)) are periplasmic. Cytochrome c domains are found at residues 108-200 (FAMA…LSLN) and 207-292 (AAAE…HNLG). The heme c site is built by cysteine 121, cysteine 124, histidine 125, methionine 175, cysteine 220, cysteine 223, histidine 224, and methionine 269.

It belongs to the CcoP / FixP family. Component of the cbb3-type cytochrome c oxidase at least composed of CcoN, CcoO, CcoQ and CcoP. Requires heme c as cofactor.

Its subcellular location is the cell inner membrane. The protein operates within energy metabolism; oxidative phosphorylation. C-type cytochrome. Part of the cbb3-type cytochrome c oxidase complex. CcoP subunit is required for transferring electrons from donor cytochrome c via its heme groups to CcoO subunit. From there, electrons are shuttled to the catalytic binuclear center of CcoN subunit where oxygen reduction takes place. The complex also functions as a proton pump. In Azospirillum brasilense, this protein is Cbb3-type cytochrome c oxidase subunit CcoP.